The following is a 563-amino-acid chain: Putative ABC transporter ATP-binding protein SCO2324 (563 aa).

The ABC transporter 1 domain occupies 2-243 (IRFEDVSVTY…SPVYPPVVGL (242 aa)). Residue 36–43 (GPSGVGKS) coordinates ATP. Residues 271–317 (AGREIPDHTPPPSAPLPAPPAPRPVTSRWRRRGKRPENPSAPTPYAA) are disordered. The span at 278–293 (HTPPPSAPLPAPPAPR) shows a compositional bias: pro residues. Positions 317–545 (AEVRSLAVRR…SPSYAPQVAK (229 aa)) constitute an ABC transporter 2 domain. Residue 349-356 (GRNGAGKS) coordinates ATP.

Belongs to the ABC transporter superfamily.

It localises to the cell membrane. In terms of biological role, probably part of an ABC transporter complex. Responsible for energy coupling to the transport system. This Streptomyces coelicolor (strain ATCC BAA-471 / A3(2) / M145) protein is Putative ABC transporter ATP-binding protein SCO2324.